The chain runs to 368 residues: MVENSFCKKEGSPVVGDRINVKDLTLAGLERLLTGMGAERYRAGQVAIWVFQKGAESFREMTNLPANLREKLDAAAVISRPEILAKKVSSKKDAVKYLFGLPDGQAVESVFMKHAYGNSVCVSTQAGCRMGCRFCASALGGLTRNLSPGEIYDQVLGIRRDTGERISSVVLMGSGEPLDNYDATLTFIKNVTAPYGLHIGCRHITVSTCGLVPGIRRLAREKLALTLAVSLHAPNDRLRDILVPVNRKYPLTELMAACRDYAQETGRRVTFEYALLAGVNDRKEHAEELVRLLKGKMPCHVNLIPANPVPERGVKTPSRLQVELFKKILERHGLAVTVRRGLGADIDAACGQLRRKIAVMGERLNTRG.

The Proton acceptor role is filled by Glu-108. The 232-residue stretch at 114–345 folds into the Radical SAM core domain; it reads HAYGNSVCVS…VTVRRGLGAD (232 aa). An intrachain disulfide couples Cys-121 to Cys-350. [4Fe-4S] cluster-binding residues include Cys-128, Cys-132, and Cys-135. S-adenosyl-L-methionine-binding positions include 175 to 176, Ser-207, 230 to 232, and Asn-307; these read GE and SLH. Cys-350 serves as the catalytic S-methylcysteine intermediate.

This sequence belongs to the radical SAM superfamily. RlmN family. The cofactor is [4Fe-4S] cluster.

Its subcellular location is the cytoplasm. The enzyme catalyses adenosine(2503) in 23S rRNA + 2 reduced [2Fe-2S]-[ferredoxin] + 2 S-adenosyl-L-methionine = 2-methyladenosine(2503) in 23S rRNA + 5'-deoxyadenosine + L-methionine + 2 oxidized [2Fe-2S]-[ferredoxin] + S-adenosyl-L-homocysteine. It catalyses the reaction adenosine(37) in tRNA + 2 reduced [2Fe-2S]-[ferredoxin] + 2 S-adenosyl-L-methionine = 2-methyladenosine(37) in tRNA + 5'-deoxyadenosine + L-methionine + 2 oxidized [2Fe-2S]-[ferredoxin] + S-adenosyl-L-homocysteine. Functionally, specifically methylates position 2 of adenine 2503 in 23S rRNA and position 2 of adenine 37 in tRNAs. The protein is Probable dual-specificity RNA methyltransferase RlmN of Pelotomaculum thermopropionicum (strain DSM 13744 / JCM 10971 / SI).